The chain runs to 679 residues: Stress-70 protein, mitochondrial (679 aa).

Residues 1-46 (MISASRAVAARLVGAAASRGPTAARHQDGWNGLSHEAFRIVSRRDY) constitute a mitochondrion transit peptide. The segment at 1–432 (MISASRAVAA…IQGGVLAGDV (432 aa)) is interaction with NFS1. ADP-binding residues include Thr-63 and Asn-64. Residues 63–431 (TNSCVAVMEG…AIQGGVLAGD (369 aa)) are nucleotide-binding domain (NBD). Lys-76 bears the N6-acetyllysine mark. A Phosphothreonine modification is found at Thr-87. N6-acetyllysine; alternate is present on residues Lys-135 and Lys-138. Lys-135 and Lys-138 each carry N6-succinyllysine; alternate. Lys-143 carries the post-translational modification N6-acetyllysine. Lys-206 carries the post-translational modification N6-acetyllysine; alternate. At Lys-206 the chain carries N6-succinyllysine; alternate. N6-malonyllysine; alternate is present on Lys-206. N6-acetyllysine is present on residues Lys-234 and Lys-288. Lys-300 carries the N6-acetyllysine; alternate modification. At Lys-300 the chain carries N6-succinyllysine; alternate. ADP is bound by residues Glu-313, Lys-316, and Ser-320. Residue Lys-368 is modified to N6-succinyllysine. ADP contacts are provided by Gly-388 and Arg-391. Position 394 is an N6-succinyllysine (Lys-394). Residue Ser-408 is modified to Phosphoserine. The interdomain linker stretch occupies residues 432-441 (VTDVLLLDVT). Positions 432-679 (VTDVLLLDVT…QKEDQKEEKQ (248 aa)) are interaction with FXN and ISCU. The segment at 442 to 679 (PLSLGIETLG…QKEDQKEEKQ (238 aa)) is substrate-binding domain (SBD). At Arg-513 the chain carries Omega-N-methylarginine. 2 positions are modified to N6-acetyllysine; alternate: Lys-567 and Lys-600. Residues Lys-567 and Lys-600 each carry the N6-succinyllysine; alternate modification. Lys-610 is modified (N6-succinyllysine). Lys-612 carries the N6-acetyllysine modification. Residue Lys-646 is modified to N6-acetyllysine; alternate. N6-succinyllysine; alternate is present on Lys-646. Residues 656 to 679 (ASEREGSGSSGTGEQKEDQKEEKQ) form a disordered region. A compositionally biased stretch (basic and acidic residues) spans 669-679 (EQKEDQKEEKQ).

It belongs to the heat shock protein 70 family. As to quaternary structure, interacts strongly with the intermediate form of FXN and weakly with its mature form. Interacts with HSCB. Associates with the mitochondrial contact site and cristae organizing system (MICOS) complex, composed of at least MICOS10/MIC10, CHCHD3/MIC19, CHCHD6/MIC25, APOOL/MIC27, IMMT/MIC60, APOO/MIC23/MIC26 and QIL1/MIC13. This complex was also known under the names MINOS or MitOS complex. The MICOS complex associates with mitochondrial outer membrane proteins SAMM50, MTX1, MTX2 and DNAJC11, mitochondrial inner membrane protein TMEM11 and with HSPA9. Interacts with DNLZ, the interaction is required to prevent self-aggregation. Interacts with TESPA1. Interacts with PDPN. Interacts with NFU1, NFS1 and ISCU. Interacts with TP53; the interaction promotes TP53 degradation. Interacts (via SBD domain) with UBXN2A; the interaction with UBXN2A inhibits HSPA9/MOT-2 interaction with and degradation of TP53, thereby promotes TP53 translocation to the nucleus. Interacts with ITPR1 AND VDAC1; this interaction couples ITPR1 to VDAC1. Component of the TIM23 mitochondrial inner membrane pre-sequence translocase complex.

It is found in the mitochondrion. Its subcellular location is the nucleus. The protein localises to the nucleolus. The protein resides in the cytoplasm. It localises to the mitochondrion matrix. It catalyses the reaction ATP + H2O = ADP + phosphate + H(+). The chaperone activity is regulated by ATP-induced allosteric coupling of the nucleotide-binding (NBD) and substrate-binding (SBD) domains. ATP binding in the nucleotide-binding pocket (NBP) leads to a conformational change in the NBD, which is transferred through the interdomain linker (IDL) to the substrate-binding domain (SBD). This elicits a reduced substrate affinity and a faster substrate exchange rate. Upon hydrolysis of ATP to ADP, the protein undergoes a conformational change that increases its affinity for substrate proteins. It cycles through repeated phases of ATP hydrolysis and nucleotide exchange, facilitating repeated cycles of substrate binding and release. Functions in collaboration with co-chaperones. Functions with the co-chaperone, DNLZ, to maintain solubility and regulate ATP hydrolysis. Nucleotide exchange factors, GRPEL1 and GRPEL2, accelerate nucleotide exchange. Its function is as follows. Mitochondrial chaperone that plays a key role in mitochondrial protein import, folding, and assembly. Plays an essential role in the protein quality control system, the correct folding of proteins, the re-folding of misfolded proteins, and the targeting of proteins for subsequent degradation. These processes are achieved through cycles of ATP binding, ATP hydrolysis, and ADP release, mediated by co-chaperones. In mitochondria, it associates with the TIM (translocase of the inner membrane) protein complex to assist in the import and folding of mitochondrial proteins. Plays an important role in mitochondrial iron-sulfur cluster (ISC) biogenesis, interacts with and stabilizes ISC cluster assembly proteins FXN, NFU1, NFS1 and ISCU. Regulates erythropoiesis via stabilization of ISC assembly. Regulates mitochondrial calcium-dependent apoptosis by coupling two calcium channels, ITPR1 and VDAC1, at the mitochondria-associated endoplasmic reticulum (ER) membrane to facilitate calcium transport from the ER lumen to the mitochondria intermembrane space, providing calcium for the downstream calcium channel MCU, which releases it into the mitochondrial matrix. Although primarily located in the mitochondria, it is also found in other cellular compartments. In the cytosol, it associates with proteins involved in signaling, apoptosis, or senescence. It may play a role in cell cycle regulation via its interaction with and promotion of degradation of TP53. May play a role in the control of cell proliferation and cellular aging. Protects against reactive oxygen species (ROS). Extracellular HSPA9 plays a cytoprotective role by preventing cell lysis following immune attack by the membrane attack complex by disrupting formation of the complex. The polypeptide is Stress-70 protein, mitochondrial (Pongo abelii (Sumatran orangutan)).